The primary structure comprises 229 residues: MLTCVPGVLEKDDVADFRRIMDAAEWEDGRSTAGAQSALVKRNEQLPPDGDLARTLGNRIISALTANPRFISAAIPLQIFPPLFNRYVASDGHHFGVHVDNAVRGDRMTGLRIRTDLSVTLFLSEPDDYDGGDLVVEDNYGSHEVKLPAGDLVLYPASSLHLVTPVTRGTRVASFFWLQSMVRDDHARSMIFDLDTAIQSLVERLGRDDPETVKLTGIYHNLIRYWAEV.

The Fe2OG dioxygenase domain occupies 78 to 180 (QIFPPLFNRY…RVASFFWLQS (103 aa)). Fe cation-binding residues include histidine 98, aspartate 100, and histidine 161. Arginine 171 is a binding site for 2-oxoglutarate.

It depends on Fe(2+) as a cofactor. L-ascorbate serves as cofactor.

The polypeptide is PKHD-type hydroxylase Nham_1514 (Nitrobacter hamburgensis (strain DSM 10229 / NCIMB 13809 / X14)).